The sequence spans 78 residues: Large ribosomal subunit protein bL28 (78 aa).

Positions 1 to 21 are disordered; that stretch reads MSRVCQVTGKRPMVGNNRSHA.

The protein belongs to the bacterial ribosomal protein bL28 family.

The chain is Large ribosomal subunit protein bL28 from Shewanella halifaxensis (strain HAW-EB4).